A 702-amino-acid polypeptide reads, in one-letter code: MARTTPITRYRNIGISAHIDAGKTTTTERILFYTGVNHKIGEVHDGAATMDWMAQEQERGITITSAATTAFWSGMAKQFEPHRVNIIDTPGHVDFTIEVERSMRVLDGAVMVYCAVGGVQPQSETVWRQANKYKVPRIAFVNKMDRMGANFLKVVSQIKSRLAANPVPIQLAIGAEEKFTGVVDLVKMKAINWNEADAGVTFEYEEIPADMQELAEEWHQNLVESAAEASEELMEKYLGGEELTEEEIKKALRQRVLNNEVILVTCGSAFKNKGVQAMLDAVIEYLPAPTDVTAINGILDDGKDTPAVRHSDDKEPFAALAFKIATDPFVGNLTFFRVYSGVVNSGDTVMNPVKSQRERLGRIVQMHANKREEIKEVRAGDIAAAIGLKDVTTGDTLCDPSNVIILERMEFPEPVISVAVEPKTKADQEKMGLALGRLAKEDPSFRVWTDEESGQTIIAGMGELHLDILVDRMKREFNVEANVGKPQVAYRETIRETVKDVEGKHAKQSGGRGQFGHVVIDMGPLEAGGPGYEFVNDIVGGSIPKEFIPAVDKGIQEQLKSGPLAGYPVVDIKVRLHYGSYHDVDSSELAFKLAASLAFKSAFGKAKPVLLEPVMKVEVETPEDYMGDVIGDLNRRRGMIEGMEDTSTGKTVRAQVPLSEMFGYATDLRSQTQGRASYSMEFLKYAEAPNNVAQAVIEARGK.

The 283-residue stretch at 8–290 folds into the tr-type G domain; it reads TRYRNIGISA…AVIEYLPAPT (283 aa). GTP is bound by residues 17–24, 88–92, and 142–145; these read AHIDAGKT, DTPGH, and NKMD.

This sequence belongs to the TRAFAC class translation factor GTPase superfamily. Classic translation factor GTPase family. EF-G/EF-2 subfamily.

It is found in the cytoplasm. Catalyzes the GTP-dependent ribosomal translocation step during translation elongation. During this step, the ribosome changes from the pre-translocational (PRE) to the post-translocational (POST) state as the newly formed A-site-bound peptidyl-tRNA and P-site-bound deacylated tRNA move to the P and E sites, respectively. Catalyzes the coordinated movement of the two tRNA molecules, the mRNA and conformational changes in the ribosome. The sequence is that of Elongation factor G from Erwinia tasmaniensis (strain DSM 17950 / CFBP 7177 / CIP 109463 / NCPPB 4357 / Et1/99).